A 107-amino-acid polypeptide reads, in one-letter code: Large ribosomal subunit protein uL24 (107 aa).

This sequence belongs to the universal ribosomal protein uL24 family. Part of the 50S ribosomal subunit.

In terms of biological role, one of two assembly initiator proteins, it binds directly to the 5'-end of the 23S rRNA, where it nucleates assembly of the 50S subunit. Functionally, one of the proteins that surrounds the polypeptide exit tunnel on the outside of the subunit. The protein is Large ribosomal subunit protein uL24 of Nitratidesulfovibrio vulgaris (strain ATCC 29579 / DSM 644 / CCUG 34227 / NCIMB 8303 / VKM B-1760 / Hildenborough) (Desulfovibrio vulgaris).